Reading from the N-terminus, the 272-residue chain is 2-dehydro-3-deoxyphosphooctonate aldolase (272 aa).

It belongs to the KdsA family.

The protein resides in the cytoplasm. It carries out the reaction D-arabinose 5-phosphate + phosphoenolpyruvate + H2O = 3-deoxy-alpha-D-manno-2-octulosonate-8-phosphate + phosphate. It participates in carbohydrate biosynthesis; 3-deoxy-D-manno-octulosonate biosynthesis; 3-deoxy-D-manno-octulosonate from D-ribulose 5-phosphate: step 2/3. It functions in the pathway bacterial outer membrane biogenesis; lipopolysaccharide biosynthesis. In Trichlorobacter lovleyi (strain ATCC BAA-1151 / DSM 17278 / SZ) (Geobacter lovleyi), this protein is 2-dehydro-3-deoxyphosphooctonate aldolase.